Here is a 227-residue protein sequence, read N- to C-terminus: Cytochrome c oxidase subunit 2 (227 aa).

Residues Met-1–Ser-14 lie on the Mitochondrial intermembrane side of the membrane. The chain crosses the membrane as a helical span at residues Pro-15–Met-45. The Mitochondrial matrix portion of the chain corresponds to Leu-46 to Gln-59. Residues Glu-60 to Met-87 traverse the membrane as a helical segment. Residues Asp-88 to Val-227 lie on the Mitochondrial intermembrane side of the membrane. Residues His-161, Cys-196, Glu-198, Cys-200, His-204, and Met-207 each contribute to the Cu cation site. Glu-198 contacts Mg(2+). A Phosphotyrosine modification is found at Tyr-218.

This sequence belongs to the cytochrome c oxidase subunit 2 family. Component of the cytochrome c oxidase (complex IV, CIV), a multisubunit enzyme composed of 14 subunits. The complex is composed of a catalytic core of 3 subunits MT-CO1, MT-CO2 and MT-CO3, encoded in the mitochondrial DNA, and 11 supernumerary subunits COX4I, COX5A, COX5B, COX6A, COX6B, COX6C, COX7A, COX7B, COX7C, COX8 and NDUFA4, which are encoded in the nuclear genome. The complex exists as a monomer or a dimer and forms supercomplexes (SCs) in the inner mitochondrial membrane with NADH-ubiquinone oxidoreductase (complex I, CI) and ubiquinol-cytochrome c oxidoreductase (cytochrome b-c1 complex, complex III, CIII), resulting in different assemblies (supercomplex SCI(1)III(2)IV(1) and megacomplex MCI(2)III(2)IV(2)). Found in a complex with TMEM177, COA6, COX18, COX20, SCO1 and SCO2. Interacts with TMEM177 in a COX20-dependent manner. Interacts with COX20. Interacts with COX16. It depends on Cu cation as a cofactor.

Its subcellular location is the mitochondrion inner membrane. It carries out the reaction 4 Fe(II)-[cytochrome c] + O2 + 8 H(+)(in) = 4 Fe(III)-[cytochrome c] + 2 H2O + 4 H(+)(out). In terms of biological role, component of the cytochrome c oxidase, the last enzyme in the mitochondrial electron transport chain which drives oxidative phosphorylation. The respiratory chain contains 3 multisubunit complexes succinate dehydrogenase (complex II, CII), ubiquinol-cytochrome c oxidoreductase (cytochrome b-c1 complex, complex III, CIII) and cytochrome c oxidase (complex IV, CIV), that cooperate to transfer electrons derived from NADH and succinate to molecular oxygen, creating an electrochemical gradient over the inner membrane that drives transmembrane transport and the ATP synthase. Cytochrome c oxidase is the component of the respiratory chain that catalyzes the reduction of oxygen to water. Electrons originating from reduced cytochrome c in the intermembrane space (IMS) are transferred via the dinuclear copper A center (CU(A)) of subunit 2 and heme A of subunit 1 to the active site in subunit 1, a binuclear center (BNC) formed by heme A3 and copper B (CU(B)). The BNC reduces molecular oxygen to 2 water molecules using 4 electrons from cytochrome c in the IMS and 4 protons from the mitochondrial matrix. The protein is Cytochrome c oxidase subunit 2 (MT-CO2) of Lycalopex sechurae (Sechuran desert fox).